Reading from the N-terminus, the 596-residue chain is Clathrin heavy chain linker domain-containing protein 1 (596 aa).

Residues 129-241 (QLEAKMRIIE…RDIAENLKKD (113 aa)) are a coiled coil.

The protein is Clathrin heavy chain linker domain-containing protein 1 (Clhc1) of Mus musculus (Mouse).